We begin with the raw amino-acid sequence, 311 residues long: Ribosomal RNA small subunit methyltransferase H (311 aa).

Residues 41–43, D61, F85, D102, and Q109 each bind S-adenosyl-L-methionine; that span reads GGH.

It belongs to the methyltransferase superfamily. RsmH family.

The protein localises to the cytoplasm. The catalysed reaction is cytidine(1402) in 16S rRNA + S-adenosyl-L-methionine = N(4)-methylcytidine(1402) in 16S rRNA + S-adenosyl-L-homocysteine + H(+). Its function is as follows. Specifically methylates the N4 position of cytidine in position 1402 (C1402) of 16S rRNA. This chain is Ribosomal RNA small subunit methyltransferase H, found in Paracidovorax citrulli (strain AAC00-1) (Acidovorax citrulli).